A 183-amino-acid chain; its full sequence is ATP synthase subunit delta (183 aa).

It belongs to the ATPase delta chain family. As to quaternary structure, F-type ATPases have 2 components, F(1) - the catalytic core - and F(0) - the membrane proton channel. F(1) has five subunits: alpha(3), beta(3), gamma(1), delta(1), epsilon(1). F(0) has three main subunits: a(1), b(2) and c(10-14). The alpha and beta chains form an alternating ring which encloses part of the gamma chain. F(1) is attached to F(0) by a central stalk formed by the gamma and epsilon chains, while a peripheral stalk is formed by the delta and b chains.

Its subcellular location is the cell inner membrane. In terms of biological role, f(1)F(0) ATP synthase produces ATP from ADP in the presence of a proton or sodium gradient. F-type ATPases consist of two structural domains, F(1) containing the extramembraneous catalytic core and F(0) containing the membrane proton channel, linked together by a central stalk and a peripheral stalk. During catalysis, ATP synthesis in the catalytic domain of F(1) is coupled via a rotary mechanism of the central stalk subunits to proton translocation. This protein is part of the stalk that links CF(0) to CF(1). It either transmits conformational changes from CF(0) to CF(1) or is implicated in proton conduction. The polypeptide is ATP synthase subunit delta (Ruthia magnifica subsp. Calyptogena magnifica).